A 353-amino-acid chain; its full sequence is Dihydroorotate dehydrogenase (quinone) (353 aa).

Residues 66–70 (AGFDK) and threonine 90 contribute to the FMN site. Position 70 (lysine 70) interacts with substrate. Substrate is bound at residue 115–119 (NRMGF). FMN is bound by residues asparagine 143 and asparagine 176. Asparagine 176 lines the substrate pocket. Serine 179 acts as the Nucleophile in catalysis. Asparagine 181 serves as a coordination point for substrate. FMN is bound by residues lysine 212 and threonine 240. 241–242 (NT) is a binding site for substrate. Residues glycine 264, glycine 293, and 314 to 315 (YT) contribute to the FMN site.

Belongs to the dihydroorotate dehydrogenase family. Type 2 subfamily. As to quaternary structure, monomer. It depends on FMN as a cofactor.

The protein localises to the cell membrane. The enzyme catalyses (S)-dihydroorotate + a quinone = orotate + a quinol. It functions in the pathway pyrimidine metabolism; UMP biosynthesis via de novo pathway; orotate from (S)-dihydroorotate (quinone route): step 1/1. In terms of biological role, catalyzes the conversion of dihydroorotate to orotate with quinone as electron acceptor. This Mycolicibacterium gilvum (strain PYR-GCK) (Mycobacterium gilvum (strain PYR-GCK)) protein is Dihydroorotate dehydrogenase (quinone).